A 311-amino-acid chain; its full sequence is Tricarboxylate transport protein, mitochondrial (311 aa).

Positions 1–13 (MPAPRAPRALAAA) are cleaved as a propeptide — removed in mature form. Solcar repeat units follow at residues 23–111 (THPG…LSNH), 122–208 (TRGL…LRNW), and 218–303 (MNPL…VVKL). A run of 3 helical transmembrane segments spans residues 29–46 (ILAG…TFPT), 86–105 (GLSS…FGMF), and 129–143 (LGAG…VCPM). At Ser-156 the chain carries Phosphoserine. 3 helical membrane-spanning segments follow: residues 183–202 (GLTA…FFVM), 224–241 (GVFG…NTPL), and 278–297 (GTVP…FVIY).

The protein belongs to the mitochondrial carrier (TC 2.A.29) family. Possesses a short cleavable presequence, which, however, is found to be dispensable both for targeting to mitochondria and insertion into the inner membrane. However, the presequence is required to keep SLC25A1 in a soluble state and thus in an import-competent state. Mature SLC25A1 lacking the presequence is prone to aggregation.

It localises to the mitochondrion inner membrane. It catalyses the reaction (S)-malate(in) + citrate(out) = (S)-malate(out) + citrate(in). The enzyme catalyses D-threo-isocitrate(in) + citrate(out) = D-threo-isocitrate(out) + citrate(in). It carries out the reaction citrate(out) + succinate(in) = citrate(in) + succinate(out). The catalysed reaction is cis-aconitate(in) + citrate(out) = cis-aconitate(out) + citrate(in). It catalyses the reaction trans-aconitate(in) + citrate(out) = trans-aconitate(out) + citrate(in). The enzyme catalyses phosphoenolpyruvate(in) + citrate(out) = phosphoenolpyruvate(out) + citrate(in). It carries out the reaction maleate(in) + citrate(out) = maleate(out) + citrate(in). Functionally, mitochondrial electroneutral antiporter that exports citrate from the mitochondria into the cytosol in exchange for malate. Also able to mediate the exchange of citrate for isocitrate, phosphoenolpyruvate, cis-aconitate and to a lesser extent trans-aconitate, maleate and succinate. In the cytoplasm, citrate plays important roles in fatty acid and sterol synthesis, regulation of glycolysis, protein acetylation, and other physiopathological processes. In Homo sapiens (Human), this protein is Tricarboxylate transport protein, mitochondrial (SLC25A1).